A 144-amino-acid polypeptide reads, in one-letter code: D-aminoacyl-tRNA deacylase (144 aa).

The Gly-cisPro motif, important for rejection of L-amino acids signature appears at 136–137; the sequence is GP.

This sequence belongs to the DTD family. In terms of assembly, homodimer.

Its subcellular location is the cytoplasm. The enzyme catalyses glycyl-tRNA(Ala) + H2O = tRNA(Ala) + glycine + H(+). It carries out the reaction a D-aminoacyl-tRNA + H2O = a tRNA + a D-alpha-amino acid + H(+). An aminoacyl-tRNA editing enzyme that deacylates mischarged D-aminoacyl-tRNAs. Also deacylates mischarged glycyl-tRNA(Ala), protecting cells against glycine mischarging by AlaRS. Acts via tRNA-based rather than protein-based catalysis; rejects L-amino acids rather than detecting D-amino acids in the active site. By recycling D-aminoacyl-tRNA to D-amino acids and free tRNA molecules, this enzyme counteracts the toxicity associated with the formation of D-aminoacyl-tRNA entities in vivo and helps enforce protein L-homochirality. The protein is D-aminoacyl-tRNA deacylase of Vibrio atlanticus (strain LGP32) (Vibrio splendidus (strain Mel32)).